The sequence spans 373 residues: Phosphoserine aminotransferase (373 aa).

An L-glutamate-binding site is contributed by arginine 41. Pyridoxal 5'-phosphate-binding positions include 75–76 (GT), tryptophan 101, threonine 152, aspartate 172, and glutamine 195. Lysine 196 is subject to N6-(pyridoxal phosphate)lysine. Position 236-237 (236-237 (NT)) interacts with pyridoxal 5'-phosphate.

It belongs to the class-V pyridoxal-phosphate-dependent aminotransferase family. SerC subfamily. In terms of assembly, homodimer. Requires pyridoxal 5'-phosphate as cofactor.

Its subcellular location is the cytoplasm. It catalyses the reaction O-phospho-L-serine + 2-oxoglutarate = 3-phosphooxypyruvate + L-glutamate. The catalysed reaction is 4-(phosphooxy)-L-threonine + 2-oxoglutarate = (R)-3-hydroxy-2-oxo-4-phosphooxybutanoate + L-glutamate. Its pathway is amino-acid biosynthesis; L-serine biosynthesis; L-serine from 3-phospho-D-glycerate: step 2/3. In terms of biological role, catalyzes the reversible conversion of 3-phosphohydroxypyruvate to phosphoserine and of 3-hydroxy-2-oxo-4-phosphonooxybutanoate to phosphohydroxythreonine. This is Phosphoserine aminotransferase from Lactobacillus helveticus (strain DPC 4571).